The following is a 283-amino-acid chain: Elongation factor Ts (283 aa).

Residues 80–83 (TDFV) are involved in Mg(2+) ion dislocation from EF-Tu.

The protein belongs to the EF-Ts family.

Its subcellular location is the cytoplasm. Functionally, associates with the EF-Tu.GDP complex and induces the exchange of GDP to GTP. It remains bound to the aminoacyl-tRNA.EF-Tu.GTP complex up to the GTP hydrolysis stage on the ribosome. The protein is Elongation factor Ts of Klebsiella pneumoniae (strain 342).